The sequence spans 93 residues: Sec-independent protein translocase protein TatA (93 aa).

The chain crosses the membrane as a helical span at residues 1–21 (MGNVFSGWHLLVILLVIVLLF). The tract at residues 49-93 (DITRSQDGHPDSQGNFAESASSVPFVKSEKQSEKRASVTEAKKSK) is disordered. Positions 60 to 70 (SQGNFAESASS) are enriched in polar residues. Basic and acidic residues predominate over residues 75–93 (KSEKQSEKRASVTEAKKSK).

The protein belongs to the TatA/E family. The Tat system comprises two distinct complexes: a TatABC complex, containing multiple copies of TatA, TatB and TatC subunits, and a separate TatA complex, containing only TatA subunits. Substrates initially bind to the TatABC complex, which probably triggers association of the separate TatA complex to form the active translocon.

The protein resides in the cell membrane. Part of the twin-arginine translocation (Tat) system that transports large folded proteins containing a characteristic twin-arginine motif in their signal peptide across membranes. TatA could form the protein-conducting channel of the Tat system. The polypeptide is Sec-independent protein translocase protein TatA (Tropheryma whipplei (strain TW08/27) (Whipple's bacillus)).